A 316-amino-acid chain; its full sequence is NAD kinase 1 (316 aa).

Residue Asp-67 is the Proton acceptor of the active site. 67 to 68 (DG) provides a ligand contact to NAD(+). Residues 132 to 151 (RSAEERADAPTPLQQPDVED) are disordered. NAD(+)-binding positions include 160 to 161 (ND), Arg-190, and Asp-192.

The protein belongs to the NAD kinase family. It depends on a divalent metal cation as a cofactor.

Its subcellular location is the cytoplasm. The catalysed reaction is NAD(+) + ATP = ADP + NADP(+) + H(+). Its function is as follows. Involved in the regulation of the intracellular balance of NAD and NADP, and is a key enzyme in the biosynthesis of NADP. Catalyzes specifically the phosphorylation on 2'-hydroxyl of the adenosine moiety of NAD to yield NADP. In Parasynechococcus marenigrum (strain WH8102), this protein is NAD kinase 1.